We begin with the raw amino-acid sequence, 98 residues long: NADH-ubiquinone oxidoreductase chain 4L (98 aa).

The next 3 helical transmembrane spans lie at 1-21 (MMPI…GTLI), 28-48 (STLL…AMLI), and 59-79 (APLI…ALLV).

Belongs to the complex I subunit 4L family. In terms of assembly, core subunit of respiratory chain NADH dehydrogenase (Complex I) which is composed of 45 different subunits.

Its subcellular location is the mitochondrion inner membrane. It carries out the reaction a ubiquinone + NADH + 5 H(+)(in) = a ubiquinol + NAD(+) + 4 H(+)(out). In terms of biological role, core subunit of the mitochondrial membrane respiratory chain NADH dehydrogenase (Complex I) which catalyzes electron transfer from NADH through the respiratory chain, using ubiquinone as an electron acceptor. Part of the enzyme membrane arm which is embedded in the lipid bilayer and involved in proton translocation. This is NADH-ubiquinone oxidoreductase chain 4L (MT-ND4L) from Petaurus breviceps (Australian sugar glider).